Consider the following 398-residue polypeptide: Streptopain (398 aa).

The signal sequence occupies residues 1–27; sequence MNKKKLGVRLLSLLALGGFVLANPVFA. The propeptide occupies 28–145; the sequence is DQNFARNEKE…TTYAGTAEIK (118 aa). The active-site Nucleophile is the Cys-192. At Cys-192 the chain carries Cysteine methyl disulfide; in zymogen form. A protein is bound by residues Ser-282 and Gly-339. His-340 acts as the Proton acceptor in catalysis. The C-terminal active site loop stretch occupies residues 368–390; it reads RLDALNPSALGTGGGAGGFNGYQ.

This sequence belongs to the peptidase C10 family. As to quaternary structure, monomer. In terms of processing, the mature protease is derived from the precursor sequence by cleavage, either in cis via an autocatalytic mechanism, or in trans by mature SpeB or host proteases (trypsin, plasmin or subtilisin). Maturation can involve a number of protein cleavage intermediates. Mature SpeB probably plays the most important role in protein maturation in physiological conditions. Methylthiolation at Cys-192 of the inactive zymogen form is probably involved in the mechanism of secretion of the proteinase into the culture fluid.

It localises to the secreted. Its subcellular location is the host extracellular space. The protein resides in the host cytoplasm. The catalysed reaction is Preferential cleavage with hydrophobic residues at P2, P1 and P1'.. Synthesized as an inactive zymogen to protect the intracellular components of the bacteria from proteolytic activity during protein production. Once secreted into the extracellular milieu, cleaved into the active protease: maturation can be mediated in cis by autocatalytic cleavage, or in trans by mature SpeB or host proteases. Protease activity is strongly inhibited by zinc and copper, which prevent its maturation into an active protease: inhibition by metal ions may be required to prevent proteolysis of streptococcal proteins. Functionally, cysteine protease that acts as a key streptococcal virulence factor by cleaving host proteins involved in immune response. Triggers inflammation by mediating cleavage of host proteins, which can both promote host pathogenesis by triggering sterile inflammation and/or restrict streptococcal infection, depending on host immune statue and infection site. Cleaves host gasdermin-A (GSDMA) in epithelial cells, promoting GSDMA activation and formation of gasdermin pores, triggering pyroptosis. Pyroptosis triggers the elimination of the infected skin cell, depriving the pathogen of its protective niche, while inducing an inflammatory response. This ultimately prevents bacterial penetration of the epithelial barrier and a subsequent systemic dissemination of the pathogen. Also mediates cleavage of the cytokine precursor interleukin-1 beta (IL1B) to its mature form, resulting in inflammation and septic shock. SpeB-mediated maturation of IL1B plays a dual role depending on infection site: while IL1B inflammatory response prevents bacterial growth during invasive skin infections, it promotes streptococcal infection of the nasopharynx by disrupting colonization resistance mediated by the microbiota. Inhibits host autophagy be catalyzing cleavage and inactivation of key autophagy factors, such as CALCOCO2, NBR1 and SQSTM1. Cleaves and inhibits a number of complement factors, such as C2, C3-beta chain of C3, C4, C5 or SERPING1, thereby promoting evasion of host immunity. May also impair adaptive immunity by catalyzing cleavage and degradation of host immunoglobulins to promote immune system evasion; the relevance of this activity is however unsure in vivo. Catalyzes maturation and release of the peptide hormone bradykinin from the precursor Kininogen-1 (KNG1) to produce hypotension during septic shock. Also involved in bacterial translocation across the host epithelial barrier by mediating cleavage and degradation of host epithelial junction proteins, such as CDH1 and OCLN. Additionally, has been involved in degradation of fibronectin and vitronectin, two host extracellular matrix proteins involved in tissue integrity. Also able to catalyze cleavage and degradation of streptococcal proteins, such as C5a peptidase, EndoS or SmeZ. Degradation of streptococcal proteins is however strictly regulated to preserve integrity of other virulence factors. The polypeptide is Streptopain (Streptococcus pyogenes serotype M1).